Consider the following 329-residue polypeptide: DNA-directed RNA polymerase subunit alpha (329 aa).

Residues Met1 to Glu231 are alpha N-terminal domain (alpha-NTD). Positions Phe249–Arg329 are alpha C-terminal domain (alpha-CTD).

The protein belongs to the RNA polymerase alpha chain family. As to quaternary structure, homodimer. The RNAP catalytic core consists of 2 alpha, 1 beta, 1 beta' and 1 omega subunit. When a sigma factor is associated with the core the holoenzyme is formed, which can initiate transcription.

It catalyses the reaction RNA(n) + a ribonucleoside 5'-triphosphate = RNA(n+1) + diphosphate. DNA-dependent RNA polymerase catalyzes the transcription of DNA into RNA using the four ribonucleoside triphosphates as substrates. The sequence is that of DNA-directed RNA polymerase subunit alpha from Polaromonas sp. (strain JS666 / ATCC BAA-500).